Here is a 372-residue protein sequence, read N- to C-terminus: GTPase Obg (372 aa).

The 159-residue stretch at 1–159 folds into the Obg domain; that stretch reads MKFVDEATIE…RRLRLELKVL (159 aa). In terms of domain architecture, OBG-type G spans 160-336; it reads ADVGLLGLPN…LIWALQDYLD (177 aa). GTP contacts are provided by residues 166-173, 191-195, 213-216, 288-291, and 317-319; these read GLPNAGKS, FTTLH, DIPG, NKLD, and SGL. The Mg(2+) site is built by serine 173 and threonine 193. The segment at 341-372 is disordered; it reads KEQITQDKADGSYVHEDPRFDTTRDAPPSGKD.

The protein belongs to the TRAFAC class OBG-HflX-like GTPase superfamily. OBG GTPase family. Monomer. It depends on Mg(2+) as a cofactor.

The protein localises to the cytoplasm. An essential GTPase which binds GTP, GDP and possibly (p)ppGpp with moderate affinity, with high nucleotide exchange rates and a fairly low GTP hydrolysis rate. Plays a role in control of the cell cycle, stress response, ribosome biogenesis and in those bacteria that undergo differentiation, in morphogenesis control. This Bordetella avium (strain 197N) protein is GTPase Obg.